Reading from the N-terminus, the 345-residue chain is Ribonucleoside-diphosphate reductase small chain 2 (345 aa).

Residue M1 is modified to N-acetylmethionine. Y131 is a catalytic residue. Phosphoserine is present on residues S169 and S332. T334 carries the phosphothreonine modification. S336 bears the Phosphoserine mark. K337 is covalently cross-linked (Glycyl lysine isopeptide (Lys-Gly) (interchain with G-Cter in ubiquitin)).

The protein belongs to the ribonucleoside diphosphate reductase small chain family. In terms of assembly, heterotetramer of two large (R1) and two small (R2) subunits. S.cerevisiae has two different R1 subunits (RNR1 and RNR3) and two different R2 subunits (RNR2 and RNR4). The functional form of the small subunits is a RNR2-RNR4 heterodimer, where RNR2 provides the iron-radical center and RNR4 is required for proper folding of RNR2 and assembly with the large subunits. Under normal growth conditions, the active form of the large subunits is a homodimer of the constitutively expressed RNR1. In damaged cells or cells arrested for DNA synthesis, the reductase consists of multiple species because of the association of the small subunits (RNR2-RNR4) with either the RNR1 homodimer or a heterodimer of RNR1 and the damage-inducible RNR3. Interacts with DIF1.

It localises to the nucleus. It catalyses the reaction a 2'-deoxyribonucleoside 5'-diphosphate + [thioredoxin]-disulfide + H2O = a ribonucleoside 5'-diphosphate + [thioredoxin]-dithiol. Functionally, provides the precursors necessary for DNA synthesis. Catalyzes the biosynthesis of deoxyribonucleotides from the corresponding ribonucleotides. RNR4 is required for proper folding of RNR2 and assembly with the large subunits. The protein is Ribonucleoside-diphosphate reductase small chain 2 (RNR4) of Saccharomyces cerevisiae (strain ATCC 204508 / S288c) (Baker's yeast).